We begin with the raw amino-acid sequence, 89 residues long: UPF0335 protein Caul_0876 (89 aa).

It belongs to the UPF0335 family.

This Caulobacter sp. (strain K31) protein is UPF0335 protein Caul_0876.